Here is a 256-residue protein sequence, read N- to C-terminus: Floral homeotic protein APETALA 1-1 (256 aa).

Positions Met-1 to Ser-61 constitute an MADS-box domain. A K-box domain is found at Asn-88–Val-178.

As to quaternary structure, homodimer capable of binding to CArG-box sequences. In terms of tissue distribution, expressed in some of the meristems of arrest-stage broccoli heads.

The protein localises to the nucleus. Transcription factor that promotes early floral meristem identity in synergy with LEAFY. Displays a redundant function with CAULIFLOWER in the up-regulation of LEAFY. Required subsequently for the transition of an inflorescence meristem into a floral meristem, and for the normal development of sepals and petals in flowers. Regulates positively B class homeotic proteins. The polypeptide is Floral homeotic protein APETALA 1-1 (1AP1) (Brassica oleracea var. italica (Broccoli)).